We begin with the raw amino-acid sequence, 230 residues long: Sugar fermentation stimulation protein homolog (230 aa).

It belongs to the SfsA family.

The sequence is that of Sugar fermentation stimulation protein homolog from Clostridium botulinum (strain 657 / Type Ba4).